A 377-amino-acid polypeptide reads, in one-letter code: Serine/threonine-protein phosphatase PP2A-2 catalytic subunit (377 aa).

The interval 1 to 66 (MDMEIDDPMH…SGIADHKSSK (66 aa)) is disordered. The span at 28 to 40 (DDGKNNTKARSND) shows a compositional bias: basic and acidic residues. Position 38 is a phosphoserine (S38). T43 carries the phosphothreonine modification. The Mn(2+) site is built by D125, H127, D153, and N185. The Proton donor role is filled by H186. Residues H235 and H309 each coordinate Mn(2+). The residue at position 377 (L377) is a Leucine methyl ester.

It belongs to the PPP phosphatase family. PP-2A subfamily. As to quaternary structure, inactivated in a complex with phosphatase methylesterase PPE1 (PP2Ai). Interacts with phosphatase 2A activator RRD2, which can reactivate PP2Ai by dissociating the catalytic subunit from the complex. Interacts with TAP42. The cofactor is Mn(2+). Post-translationally, reversibly methyl esterified on Leu-377 by leucine carboxyl methyltransferase 1 (PPM1) and protein phosphatase methylesterase 1 (PPE1). Carboxyl methylation influences the affinity of the catalytic subunit for the different regulatory subunits, thereby modulating the PP2A holoenzyme's substrate specificity, enzyme activity and cellular localization.

The catalysed reaction is O-phospho-L-seryl-[protein] + H2O = L-seryl-[protein] + phosphate. The enzyme catalyses O-phospho-L-threonyl-[protein] + H2O = L-threonyl-[protein] + phosphate. Its function is as follows. Exact function not known, phosphatase 2A performs an essential cellular function. The chain is Serine/threonine-protein phosphatase PP2A-2 catalytic subunit (PPH22) from Saccharomyces cerevisiae (strain ATCC 204508 / S288c) (Baker's yeast).